The following is a 366-amino-acid chain: Chorismate synthase (366 aa).

NADP(+) contacts are provided by Arg48 and Arg54. Residues 125-127 (RSS), 238-239 (NA), Gly278, 293-297 (KPTSS), and Arg319 contribute to the FMN site.

The protein belongs to the chorismate synthase family. Homotetramer. Requires FMNH2 as cofactor.

It catalyses the reaction 5-O-(1-carboxyvinyl)-3-phosphoshikimate = chorismate + phosphate. Its pathway is metabolic intermediate biosynthesis; chorismate biosynthesis; chorismate from D-erythrose 4-phosphate and phosphoenolpyruvate: step 7/7. In terms of biological role, catalyzes the anti-1,4-elimination of the C-3 phosphate and the C-6 proR hydrogen from 5-enolpyruvylshikimate-3-phosphate (EPSP) to yield chorismate, which is the branch point compound that serves as the starting substrate for the three terminal pathways of aromatic amino acid biosynthesis. This reaction introduces a second double bond into the aromatic ring system. The protein is Chorismate synthase of Neisseria meningitidis serogroup C / serotype 2a (strain ATCC 700532 / DSM 15464 / FAM18).